The primary structure comprises 416 residues: Tyrosine--tRNA ligase (416 aa).

A 'HIGH' region motif is present at residues 55 to 64 (PTGSEIHLGH). Positions 249–253 (KMSKS) match the 'KMSKS' region motif. ATP is bound at residue lysine 252. The region spanning 352 to 416 (TKAFHLLSSI…GKKTFRRISN (65 aa)) is the S4 RNA-binding domain.

This sequence belongs to the class-I aminoacyl-tRNA synthetase family. TyrS type 2 subfamily. As to quaternary structure, homodimer.

It is found in the cytoplasm. The catalysed reaction is tRNA(Tyr) + L-tyrosine + ATP = L-tyrosyl-tRNA(Tyr) + AMP + diphosphate + H(+). Functionally, catalyzes the attachment of tyrosine to tRNA(Tyr) in a two-step reaction: tyrosine is first activated by ATP to form Tyr-AMP and then transferred to the acceptor end of tRNA(Tyr). This Prochlorococcus marinus (strain SARG / CCMP1375 / SS120) protein is Tyrosine--tRNA ligase.